Reading from the N-terminus, the 229-residue chain is Large ribosomal subunit protein uL1 (229 aa).

This sequence belongs to the universal ribosomal protein uL1 family. As to quaternary structure, part of the 50S ribosomal subunit.

Functionally, binds directly to 23S rRNA. The L1 stalk is quite mobile in the ribosome, and is involved in E site tRNA release. Protein L1 is also a translational repressor protein, it controls the translation of the L11 operon by binding to its mRNA. In Lactiplantibacillus plantarum (strain ATCC BAA-793 / NCIMB 8826 / WCFS1) (Lactobacillus plantarum), this protein is Large ribosomal subunit protein uL1.